The chain runs to 354 residues: Lysine racemase (354 aa).

An N6-(pyridoxal phosphate)lysine modification is found at Lys36.

It belongs to the alanine racemase family. Homodimer. Pyridoxal 5'-phosphate serves as cofactor.

The catalysed reaction is L-lysine = D-lysine. It catalyses the reaction L-ornithine = D-ornithine. It functions in the pathway cell wall biogenesis; peptidoglycan biosynthesis. Functionally, catalyzes the interconversion of D-lysine and L-lysine. Has also high activity toward ornithine, and weaker activity toward alanine. Contributes to production of D-lysine and D-alanine for use as peptidoglycan components. This Thermotoga maritima (strain ATCC 43589 / DSM 3109 / JCM 10099 / NBRC 100826 / MSB8) protein is Lysine racemase.